The sequence spans 255 residues: Small ribosomal subunit protein eS4 (255 aa).

The S4 RNA-binding domain maps to 43-115 (IPLLILVRDV…PTRFFTLHPI (73 aa)).

It belongs to the eukaryotic ribosomal protein eS4 family.

This chain is Small ribosomal subunit protein eS4, found in Hyperthermus butylicus (strain DSM 5456 / JCM 9403 / PLM1-5).